A 567-amino-acid chain; its full sequence is Urease subunit alpha (567 aa).

The region spanning 129–567 (GGIDSHIHFI…LPMAQRYFLF (439 aa)) is the Urease domain. Ni(2+)-binding residues include H134, H136, and K217. K217 is subject to N6-carboxylysine. H219 lines the substrate pocket. Residues H246 and H272 each coordinate Ni(2+). H320 serves as the catalytic Proton donor. D360 contacts Ni(2+).

It belongs to the metallo-dependent hydrolases superfamily. Urease alpha subunit family. As to quaternary structure, heterotrimer of UreA (gamma), UreB (beta) and UreC (alpha) subunits. Three heterotrimers associate to form the active enzyme. Ni cation serves as cofactor. Post-translationally, carboxylation allows a single lysine to coordinate two nickel ions.

It localises to the cytoplasm. The catalysed reaction is urea + 2 H2O + H(+) = hydrogencarbonate + 2 NH4(+). Its pathway is nitrogen metabolism; urea degradation; CO(2) and NH(3) from urea (urease route): step 1/1. The sequence is that of Urease subunit alpha from Alcanivorax borkumensis (strain ATCC 700651 / DSM 11573 / NCIMB 13689 / SK2).